A 427-amino-acid chain; its full sequence is MSTSFENKATNRGIITFTISQDEIKPALDQAFNKVKKDLNVPGFRKGHMPRTVFNQKFGEEALYENALNLVLPKAYEAAVAELGLDVVAQPKIDVVSMEKGQDWKLTAEVVTKPEVKLGDYKDLSVEVDASKEVSDEEVDAKVERERNNLAELTVKDGEAAQGDTVVIDFVGSVDGVEFDGGKGDNFSLELGSGQFIPGFEEQLVGSKAGQTVDVNVTFPEDYQAEDLAGKDAKFVTTIHEVKTKEVPALDDELAKDIDEEVETLDELKAKYRKELESAKEIAFDDAVEGAAIELAVANAEIVELPEEMVHDEVHRAMNEFMGNMQRQGISPEMYFQLTGTTEEDLHKQYQADADKRVKTNLVIEAIAAAEGFEATDEEIEKEITDLASEYNMEADQVRGLLSADMLKHDIAMKKAVDVITSSATVK.

One can recognise a PPIase FKBP-type domain in the interval Gly163–Pro248.

This sequence belongs to the FKBP-type PPIase family. Tig subfamily.

It is found in the cytoplasm. It catalyses the reaction [protein]-peptidylproline (omega=180) = [protein]-peptidylproline (omega=0). Its function is as follows. Involved in protein export. Acts as a chaperone by maintaining the newly synthesized protein in an open conformation. Functions as a peptidyl-prolyl cis-trans isomerase. The chain is Trigger factor from Streptococcus agalactiae serotype Ia (strain ATCC 27591 / A909 / CDC SS700).